Consider the following 969-residue polypeptide: Exoribonuclease II, mitochondrial (969 aa).

A mitochondrion-targeting transit peptide spans Met1–Lys41. Residues Arg28–Gln38 show a composition bias toward basic residues. The disordered stretch occupies residues Arg28–Gln54. Over residues Ala40–Asp51 the composition is skewed to basic and acidic residues. The region spanning Arg522–Gln853 is the RNB domain.

It belongs to the RNR ribonuclease family. In terms of assembly, MSU1 and SUV3 are the two components of the mitochondrial degradosome (mtEXO).

The protein localises to the mitochondrion matrix. It catalyses the reaction Exonucleolytic cleavage in the 3'- to 5'-direction to yield nucleoside 5'-phosphates.. Essential for mitochondrial biogenesis. In terms of biological role, required for intron-independent turnover and processing of mitochondrial RNA. Participates in 3' mtRNA processing where it hydrolyzes single-stranded RNA or partially double-stranded RNA with 3' single-stranded tails. The protein is Exoribonuclease II, mitochondrial (DSS1) of Saccharomyces cerevisiae (strain ATCC 204508 / S288c) (Baker's yeast).